We begin with the raw amino-acid sequence, 1020 residues long: MKMPLLVSHLLLISLTSCLGDFTWHRRYGHGVSEEDKGFGPIFEEQPINTIYPEESLEGKVSLNCRARASPFPVYKWRMNNGDVDLTNDRYSMVGGNLVINNPDKQKDAGVYYCLASNNYGMVRSTEATLSFGYLDPFPPEERPEVKVKEGKGMVLLCDPPYHFPDDLSYRWLLNEFPVFITMDKRRFVSQTNGNLYIANVESSDRGNYSCFVSSPSITKSVFSKFIPLIPIPERTTKPYPADIVVQFKDIYTMMGQNVTLECFALGNPVPDIRWRKVLEPMPSTAEISTSGAVLKIFNIQLEDEGLYECEAENIRGKDKHQARIYVQAFPEWVEHINDTEVDIGSDLYWPCIATGKPIPTIRWLKNGYSYHKGELRLYDVTFENAGMYQCIAENAYGSIYANAELKILALAPTFEMNPMKKKILAAKGGRVIIECKPKAAPKPKFSWSKGTEWLVNSSRILIWEDGSLEINNITRNDGGIYTCFAENNRGKANSTGTLVITNPTRIILAPINADITVGENATMQCAASFDPALDLTFVWSFNGYVIDFNKEITHIHYQRNFMLDANGELLIRNAQLKHAGRYTCTAQTIVDNSSASADLVVRGPPGPPGGLRIEDIRATSVALTWSRGSDNHSPISKYTIQTKTILSDDWKDAKTDPPIIEGNMESAKAVDLIPWMEYEFRVVATNTLGTGEPSIPSNRIKTDGAAPNVAPSDVGGGGGTNRELTITWAPLSREYHYGNNFGYIVAFKPFDGEEWKKVTVTNPDTGRYVHKDETMTPSTAFQVKVKAFNNKGDGPYSLVAVINSAQDAPSEAPTEVGVKVLSSSEISVHWKHVLEKIVESYQIRYWAGHDKEAAAHRVQVTSQEYSARLENLLPDTQYFIEVGACNSAGCGPSSDVIETFTRKAPPSQPPRIISSVRSGSRYIITWDHVVALSNESTVTGYKILYRPDGQHDGKLFSTHKHSIEVPIPRDGEYVVEVRAHSDGGDGVVSQVKISGVSTLSSSLLSLLLPSLGFLVYSEF.

Positions 1–20 (MKMPLLVSHLLLISLTSCLG) are cleaved as a signal peptide. 6 consecutive Ig-like C2-type domains span residues 41-131 (PIFE…ATLS), 137-223 (PFPP…KSVF), 241-326 (PADI…ARIY), 331-407 (PEWV…AELK), 413-500 (PTFE…GTLV), and 504-603 (PTRI…LVVR). Disulfide bonds link Cys-65–Cys-114 and Cys-158–Cys-211. N-linked (GlcNAc...) asparagine glycosylation is found at Asn-208 and Asn-258. An intrachain disulfide couples Cys-263 to Cys-310. The N-linked (GlcNAc...) asparagine glycan is linked to Asn-338. Disulfide bonds link Cys-352–Cys-391 and Cys-436–Cys-484. 4 N-linked (GlcNAc...) asparagine glycosylation sites follow: Asn-457, Asn-473, Asn-494, and Asn-521. A disulfide bridge links Cys-526 with Cys-585. Asn-593 carries an N-linked (GlcNAc...) asparagine glycan. 4 consecutive Fibronectin type-III domains span residues 608–706 (PPGG…TDGA), 711–808 (APSD…SAQD), 813–908 (APTE…APPS), and 909–1002 (QPPR…TLSS). Residues 695 to 719 (SIPSNRIKTDGAAPNVAPSDVGGGG) are disordered. The N-linked (GlcNAc...) asparagine glycan is linked to Asn-935. Residue Ser-1001 is the site of GPI-anchor amidated serine attachment. The propeptide at 1002–1020 (SSLLSLLLPSLGFLVYSEF) is removed in mature form.

It belongs to the immunoglobulin superfamily. Contactin family. As to quaternary structure, monomer. Interacts with CNTNAP1 in cis form. Binds to the carbonic-anhydrase like domain of PTPRZ1. Interacts with NOTCH1 and TNR. Detected in a complex with NRCAM and PTPRB. Interacts with TASOR. As to expression, expressed in the ovary and in Sertoli cells of the testis.

The protein resides in the cell membrane. Its function is as follows. Contactins mediate cell surface interactions during nervous system development. Involved in the formation of paranodal axo-glial junctions in myelinated peripheral nerves and in the signaling between axons and myelinating glial cells via its association with CNTNAP1. Participates in oligodendrocytes generation by acting as a ligand of NOTCH1. Its association with NOTCH1 promotes NOTCH1 activation through the released notch intracellular domain (NICD) and subsequent translocation to the nucleus. Interaction with TNR induces a repulsion of neurons and an inhibition of neurite outgrowth. The sequence is that of Contactin-1 (Cntn1) from Mus musculus (Mouse).